Here is a 36-residue protein sequence, read N- to C-terminus: Protein usd (36 aa).

Functionally, required for translation of SpoIIID. In Bacillus subtilis (strain 168), this protein is Protein usd (usd).